The sequence spans 394 residues: Lipase 3 (394 aa).

The signal sequence occupies residues 1 to 20 (MTRGALKVTILLVGLGLVLA). N-linked (GlcNAc...) asparagine glycosylation occurs at N131. Residues S164 and H369 each act as charge relay system in the active site.

It belongs to the AB hydrolase superfamily. Lipase family. In terms of tissue distribution, fat body.

This chain is Lipase 3 (Lip3), found in Drosophila melanogaster (Fruit fly).